The sequence spans 158 residues: NAD(P)H-quinone oxidoreductase subunit J, chloroplastic (158 aa).

Belongs to the complex I 30 kDa subunit family. In terms of assembly, NDH is composed of at least 16 different subunits, 5 of which are encoded in the nucleus.

It localises to the plastid. Its subcellular location is the chloroplast thylakoid membrane. It catalyses the reaction a plastoquinone + NADH + (n+1) H(+)(in) = a plastoquinol + NAD(+) + n H(+)(out). The enzyme catalyses a plastoquinone + NADPH + (n+1) H(+)(in) = a plastoquinol + NADP(+) + n H(+)(out). In terms of biological role, NDH shuttles electrons from NAD(P)H:plastoquinone, via FMN and iron-sulfur (Fe-S) centers, to quinones in the photosynthetic chain and possibly in a chloroplast respiratory chain. The immediate electron acceptor for the enzyme in this species is believed to be plastoquinone. Couples the redox reaction to proton translocation, and thus conserves the redox energy in a proton gradient. The polypeptide is NAD(P)H-quinone oxidoreductase subunit J, chloroplastic (Ranunculus macranthus (Large buttercup)).